A 579-amino-acid chain; its full sequence is Arginine--tRNA ligase (579 aa).

The 'HIGH' region signature appears at proline 128–histidine 138.

It belongs to the class-I aminoacyl-tRNA synthetase family. As to quaternary structure, monomer.

The protein localises to the cytoplasm. The catalysed reaction is tRNA(Arg) + L-arginine + ATP = L-arginyl-tRNA(Arg) + AMP + diphosphate. This chain is Arginine--tRNA ligase, found in Pseudomonas syringae pv. syringae (strain B728a).